Here is a 211-residue protein sequence, read N- to C-terminus: Uridine kinase (211 aa).

13–20 is a binding site for ATP; that stretch reads GGSGSGKT.

This sequence belongs to the uridine kinase family.

The protein resides in the cytoplasm. The enzyme catalyses uridine + ATP = UMP + ADP + H(+). It catalyses the reaction cytidine + ATP = CMP + ADP + H(+). It functions in the pathway pyrimidine metabolism; CTP biosynthesis via salvage pathway; CTP from cytidine: step 1/3. It participates in pyrimidine metabolism; UMP biosynthesis via salvage pathway; UMP from uridine: step 1/1. The chain is Uridine kinase from Lactobacillus johnsonii (strain CNCM I-12250 / La1 / NCC 533).